Here is a 560-residue protein sequence, read N- to C-terminus: Protein SINE1 (560 aa).

Gly2 is subject to N-acetylglycine. The segment at 7-287 (PILRQELANL…VRGAAYEAMM (281 aa)) is ARMADILLO-type fold. Positions 517 to 560 (KKKKKKMSYAKLVIAISFVVVALFATVILMVNQDDDVGYYTVPT) constitute a KASH domain. A helical transmembrane segment spans residues 528–548 (LVIAISFVVVALFATVILMVN). Positions 557-560 (TVPT) match the Required for nuclear localization motif.

Interacts with SUN1 and SUN2. Binds to F-actin. In terms of tissue distribution, preferentially expressed in guards cells, but also detected in root cells.

It is found in the nucleus membrane. Plays a role in nucleus positioning in guard cells. The sequence is that of Protein SINE1 from Arabidopsis thaliana (Mouse-ear cress).